The sequence spans 217 residues: Thymidylate kinase (217 aa).

Residue 7-14 coordinates ATP; it reads GIDGAGKS.

Belongs to the thymidylate kinase family.

The catalysed reaction is dTMP + ATP = dTDP + ADP. Phosphorylation of dTMP to form dTDP in both de novo and salvage pathways of dTTP synthesis. In Chlorobaculum parvum (strain DSM 263 / NCIMB 8327) (Chlorobium vibrioforme subsp. thiosulfatophilum), this protein is Thymidylate kinase.